We begin with the raw amino-acid sequence, 377 residues long: Naringenin,2-oxoglutarate 3-dioxygenase (377 aa).

One can recognise a Fe2OG dioxygenase domain in the interval 193 to 297 (CVDMDQKVVV…RLSIATFQNP (105 aa)). 3 residues coordinate Fe cation: histidine 220, aspartate 222, and histidine 278. Position 288 (arginine 288) interacts with 2-oxoglutarate.

It belongs to the iron/ascorbate-dependent oxidoreductase family. Fe(2+) serves as cofactor. L-ascorbate is required as a cofactor.

It catalyses the reaction a (2S)-flavan-4-one + 2-oxoglutarate + O2 = a (2R,3R)-dihydroflavonol + succinate + CO2. The protein operates within secondary metabolite biosynthesis; flavonoid biosynthesis. Catalyzes the 3-beta-hydroxylation of 2S-flavanones to 2R,3R-dihydroflavonols which are intermediates in the biosynthesis of flavonols, anthocyanidins, catechins and proanthocyanidins in plants. The polypeptide is Naringenin,2-oxoglutarate 3-dioxygenase (Hordeum vulgare (Barley)).